The sequence spans 144 residues: 3-dehydroquinate dehydratase (144 aa).

Tyr-24 (proton acceptor) is an active-site residue. The substrate site is built by Asn-76, His-82, and Asp-89. Residue His-102 is the Proton donor of the active site. Residues 103-104 (LS) and Arg-113 each bind substrate.

This sequence belongs to the type-II 3-dehydroquinase family. In terms of assembly, homododecamer.

It carries out the reaction 3-dehydroquinate = 3-dehydroshikimate + H2O. It functions in the pathway metabolic intermediate biosynthesis; chorismate biosynthesis; chorismate from D-erythrose 4-phosphate and phosphoenolpyruvate: step 3/7. In terms of biological role, catalyzes a trans-dehydration via an enolate intermediate. The sequence is that of 3-dehydroquinate dehydratase from Nitrosomonas europaea (strain ATCC 19718 / CIP 103999 / KCTC 2705 / NBRC 14298).